Reading from the N-terminus, the 962-residue chain is Atromentin synthetase nps3 (962 aa).

Residues 55–469 (FISSSAHDSS…SGRIKDTVIV (415 aa)) form an adenylation (A) domain region. Residues 601 to 679 (VPATITETAF…DLAKYIDALV (79 aa)) form the Carrier domain. Residues 606–676 (TETAFAKIFA…VLRDLAKYID (71 aa)) are thiolation and peptide carrier (T) domain. S638 bears the O-(pantetheine 4'-phosphoryl)serine mark. The tract at residues 702–805 (PIFFVHPGVG…VGLINIPPHI (104 aa)) is thioesterase (TE) domain.

This sequence belongs to the ATP-dependent AMP-binding enzyme family.

It functions in the pathway secondary metabolite biosynthesis. In terms of biological role, an L-tyrosine:2-oxoglutarate aminotransferase (probably amt1) and atromentin synthetase nps3 catalyze consecutive steps to turn over L-tyrosine into atromentin, which represents the generic precursor molecule for the entire terphenylquinone and pulvinic acid family of pigments, which are widely distributed secondary metabolites in homobasidiomycetes. The first step catalyzed by the aminotransferase converts L-tyrosine in to 4-hydroxyphenylpyruvate (4-HPP). Adenylation of two 4-HPP monomers by the nps3 adenylation (A) domain, covalent tethering of the monomers as a thioester and oxoester onto the nps3 thiolation (T) and thioesterase (TE) domains, respectively, and symmetric C-C-bond formation between two monomers catalyzed by the nps3 TE domain leads to atromentin. Follow-up products of atromentin in S.lacrymans include atromentic acid, xerocomic acid, isoxerocomic acid and variegatic acid. This chain is Atromentin synthetase nps3 (nps3), found in Serpula lacrymans var. lacrymans (strain S7.9) (Dry rot fungus).